The primary structure comprises 423 residues: AP-1 complex subunit mu-1 (423 aa).

Ser2 bears the N-acetylserine mark. Thr152, Thr154, and Thr223 each carry phosphothreonine. The MHD domain occupies Lys168–Arg421.

Belongs to the adaptor complexes medium subunit family. As to quaternary structure, adaptor protein complex 1 (AP-1) is a heterotetramer composed of two large adaptins (gamma-type subunit AP1G1 and beta-type subunit AP1B1), a medium adaptin (mu-type subunit AP1M1 or AP1M2) and a small adaptin (sigma-type subunit AP1S1 or AP1S2 or AP1S3). Interacts with MARCHF11. In terms of processing, phosphorylation of membrane-bound AP1M1/AP1M2 increases its affinity for sorting signals.

It is found in the cytoplasmic vesicle. The protein resides in the clathrin-coated vesicle membrane. Its subcellular location is the golgi apparatus. Subunit of clathrin-associated adaptor protein complex 1 that plays a role in protein sorting in the trans-Golgi network (TGN) and endosomes. The AP complexes mediate the recruitment of clathrin to membranes and the recognition of sorting signals within the cytosolic tails of transmembrane cargo molecules. The protein is AP-1 complex subunit mu-1 of Rattus norvegicus (Rat).